We begin with the raw amino-acid sequence, 333 residues long: MARVAINGFGRIGRLVYRIIYERKNPDIEVVAINDLTDTKTLAHLLKYDSVHKKFPGKVEYTENSLIVDGKEIKVFAEPDPSKLPWKDLGVDFVIESTGVFRNREKAELHLQAGAKKVIITAPAKGEDITVVIGCNEDQLKPEHTIISCASCTTNSIAPIVKVLHEKFGIVSGMLTTVHSYTNDQRVLDLPHKDLRRARAAAVNIIPTTTGAAKAVALVVPEVKGKLDGMAIRVPTPDGSITDLTVLVEKETTVEEVNAVMKEATEGRLKGIIGYNDEPIVSSDIIGTTFSGIFDATITNVIGGKLVKVASWYDNEYGYSNRVVDTLELLLKM.

NAD(+) contacts are provided by residues 11–12 (RI), D35, and T121. D-glyceraldehyde 3-phosphate-binding positions include 151–153 (SCT) and T182. C152 functions as the Nucleophile in the catalytic mechanism. N183 provides a ligand contact to NAD(+). D-glyceraldehyde 3-phosphate contacts are provided by residues R197, 210–211 (TG), and R233. Residue N315 participates in NAD(+) binding.

This sequence belongs to the glyceraldehyde-3-phosphate dehydrogenase family. Homotetramer.

It is found in the cytoplasm. It carries out the reaction D-glyceraldehyde 3-phosphate + phosphate + NAD(+) = (2R)-3-phospho-glyceroyl phosphate + NADH + H(+). It functions in the pathway carbohydrate degradation; glycolysis; pyruvate from D-glyceraldehyde 3-phosphate: step 1/5. Its function is as follows. Catalyzes the oxidative phosphorylation of glyceraldehyde 3-phosphate (G3P) to 1,3-bisphosphoglycerate (BPG) using the cofactor NAD. The first reaction step involves the formation of a hemiacetal intermediate between G3P and a cysteine residue, and this hemiacetal intermediate is then oxidized to a thioester, with concomitant reduction of NAD to NADH. The reduced NADH is then exchanged with the second NAD, and the thioester is attacked by a nucleophilic inorganic phosphate to produce BPG. The protein is Glyceraldehyde-3-phosphate dehydrogenase (gap) of Thermotoga maritima (strain ATCC 43589 / DSM 3109 / JCM 10099 / NBRC 100826 / MSB8).